We begin with the raw amino-acid sequence, 439 residues long: MKKLLLTASIICLASAGLAEENPTPVISNSDTEIKLEGFYLFESGYIKQDHLILFDKNVTDNRKKLGFYTEAAFAATISKTINDVIAGAKIVLQPTTRVKTSASYNGSHIFIETSYGKVELGSPVDASAKLRVTGSQVTAGTGGWYRYALLDGQYMRYNGLKPDFDTSASFYLESYSNSFDQINEKTEKARRLNFFTPKMKGFQAGISYTPDTANTGGNKDINNLTLESSGRNGVSVSRTGIKTVSLGNGETMTINQNIRDAFSAGLTYEHEISEDADLKLSVTGEYGKPARRLVHAKMEGTKVIEVLNTYKLSNLKAYNLGAVFTYGNFSCGASYGSLGKSLTAKEYYKVGRDTYYYNGAVAYGQGPIKTSLEYLKTSRYKNTVDAVSLATEYKIMPGLLPYAEISHFQAKGKPVYYPEAPSKTTRGTVGLIGTKLKF.

A signal peptide spans 1–19 (MKKLLLTASIICLASAGLA).

This is an uncharacterized protein from Rickettsia felis (strain ATCC VR-1525 / URRWXCal2) (Rickettsia azadi).